The following is a 440-amino-acid chain: Protein C-ets-1 (440 aa).

2 positions are modified to N6-acetyllysine; alternate: Lys8 and Lys15. Residues Lys8 and Lys15 each participate in a glycyl lysine isopeptide (Lys-Gly) (interchain with G-Cter in SUMO2); alternate cross-link. Lys15 participates in a covalent cross-link: Glycyl lysine isopeptide (Lys-Gly) (interchain with G-Cter in SUMO); alternate. Residue Thr38 is modified to Phosphothreonine; by MAPK. In terms of domain architecture, PNT spans Ala51–Asp136. The segment at Glu130–Arg243 is activation domain; required for transcription activation. Residue Lys138 forms a Glycyl lysine isopeptide (Lys-Gly) (interchain with G-Cter in SUMO2) linkage. Phosphotyrosine is present on Tyr223. Lys227 is covalently cross-linked (Glycyl lysine isopeptide (Lys-Gly) (interchain with G-Cter in SUMO)). Phosphoserine; by CaMK2 is present on Ser251. Ser254 carries the phosphoserine modification. Thr265 carries the phosphothreonine modification. 2 positions are modified to phosphoserine: Ser267 and Ser270. Phosphoserine; by CaMK2 is present on residues Ser282 and Ser285. A helix HI-1 region spans residues Phe304–Ala312. Lys305 bears the N6-acetyllysine mark. The helix HI-2 stretch occupies residues Ala323–Thr330. A DNA-binding region (ETS) is located at residues Ile335 to Val415. The segment at Leu418–Leu422 is helix H4. Positions Pro426–Met432 are helix H5.

Belongs to the ETS family. As to quaternary structure, binds DNA as a homodimer; homodimerization is required for transcription activation. Interacts with MAF and MAFB. Interacts with PAX5; the interaction alters DNA-binding properties. Interacts with DAXX. Interacts with UBE2I. Interacts with SP100; the interaction is direct and modulates ETS1 transcriptional activity. In terms of processing, phosphorylation at Ser-251, Ser-282 and Ser-285 by CaMK2/CaMKII in response to calcium signaling decreases affinity for DNA: an increasing number of phosphoserines causes DNA-binding to become progressively weaker. Sumoylated on Lys-15 and Lys-227, preferentially with SUMO2; which inhibits transcriptional activity. Post-translationally, ubiquitinated; which induces proteasomal degradation.

The protein localises to the nucleus. The protein resides in the cytoplasm. Its activity is regulated as follows. Autoinhibited by a module composed of four alpha helices (HI-1, HI-2, H4, and H5) that flank the DNA-binding ETS domain, reducing the affinity for DNA. Phosphorylation by CaMK2/CaMKII in response to calcium signaling decreases affinity for DNA. Functionally, transcription factor. Directly controls the expression of cytokine and chemokine genes in a wide variety of different cellular contexts. May control the differentiation, survival and proliferation of lymphoid cells. May also regulate angiogenesis through regulation of expression of genes controlling endothelial cell migration and invasion. This chain is Protein C-ets-1 (Ets1), found in Mus musculus (Mouse).